A 38-amino-acid chain; its full sequence is Photosystem II reaction center protein L (38 aa).

Residues 17–37 form a helical membrane-spanning segment; it reads SLFWGLLLIFVLAVLFSSYFF.

Belongs to the PsbL family. PSII is composed of 1 copy each of membrane proteins PsbA, PsbB, PsbC, PsbD, PsbE, PsbF, PsbH, PsbI, PsbJ, PsbK, PsbL, PsbM, PsbT, PsbY, PsbZ, Psb30/Ycf12, at least 3 peripheral proteins of the oxygen-evolving complex and a large number of cofactors. It forms dimeric complexes.

Its subcellular location is the plastid. The protein localises to the chloroplast thylakoid membrane. One of the components of the core complex of photosystem II (PSII). PSII is a light-driven water:plastoquinone oxidoreductase that uses light energy to abstract electrons from H(2)O, generating O(2) and a proton gradient subsequently used for ATP formation. It consists of a core antenna complex that captures photons, and an electron transfer chain that converts photonic excitation into a charge separation. This subunit is found at the monomer-monomer interface and is required for correct PSII assembly and/or dimerization. This Cyanidium caldarium (Red alga) protein is Photosystem II reaction center protein L.